Reading from the N-terminus, the 176-residue chain is Dual-action ribosomal maturation protein DarP (176 aa).

It belongs to the DarP family.

The protein resides in the cytoplasm. Functionally, member of a network of 50S ribosomal subunit biogenesis factors which assembles along the 30S-50S interface, preventing incorrect 23S rRNA structures from forming. Promotes peptidyl transferase center (PTC) maturation. The chain is Dual-action ribosomal maturation protein DarP from Haemophilus ducreyi (strain 35000HP / ATCC 700724).